The primary structure comprises 222 residues: MPSLSKEAALVHDALVARGLETPLRPPMDELDNETRKSLIAGHMTEIMQLLNLDLSDDSLMETPHRIAKMYVDEIFAGLDYANFPKITLIENKMKVDEMVTVRDITLTSTCEHHFVTIDGKATVAYIPKDYVIGLSKINRIVQFFAQRPQVQERLTQQILTALQTLLGTNNVAVSIDAVHYCVKARGIRDATSATTTTSLGGLFKSSQNTRQEFLRAVRHHP.

Zn(2+) contacts are provided by C111, H114, and C182.

The protein belongs to the GTP cyclohydrolase I family. As to quaternary structure, homomer.

It carries out the reaction GTP + H2O = 7,8-dihydroneopterin 3'-triphosphate + formate + H(+). The protein operates within cofactor biosynthesis; 7,8-dihydroneopterin triphosphate biosynthesis; 7,8-dihydroneopterin triphosphate from GTP: step 1/1. This chain is GTP cyclohydrolase 1, found in Salmonella gallinarum (strain 287/91 / NCTC 13346).